Here is a 379-residue protein sequence, read N- to C-terminus: MTVAVIIVAAGRGTRAGEGLPKQWRDLAGRPVLAQTVAAFAGLGRILVVLHPDDMGLGMDLLGGSVVLVAGGSTRSESVKNALEALEGSDVTRVLIHDGARPLVPASVTAAVLAALETTPGAAPALAVTDALWRGEAGLVAGTQDREGLYRAQTPQGFRFPEILAAHRAHPGGAADDVEVARHAGLSVAIVPGHEDNLKITYAPDFARAEAILRERKGLTMDVRLGNGYDVHAFCEGDHVVLCGVKVPHVKALLGHSDADVGMHALTDAIYGALAEGDIGRHFPPSDPQWKGAASWIFLDHAAKLAKSRGFRIGNADVTLICERPKVGPHAVAMAAELARIMEIEPSRVSVKATTSERLGFTGREEGIASIATVTLIGA.

Positions 1–223 (MTVAVIIVAA…RERKGLTMDV (223 aa)) are 2-C-methyl-D-erythritol 4-phosphate cytidylyltransferase. The segment at 224–379 (RLGNGYDVHA…SIATVTLIGA (156 aa)) is 2-C-methyl-D-erythritol 2,4-cyclodiphosphate synthase. Aspartate 230 and histidine 232 together coordinate a divalent metal cation. Residues 230 to 232 (DVH) and 256 to 257 (HS) each bind 4-CDP-2-C-methyl-D-erythritol 2-phosphate. A divalent metal cation is bound at residue histidine 264. Residues 278–280 (DIG), 354–357 (TTSE), phenylalanine 361, and arginine 364 each bind 4-CDP-2-C-methyl-D-erythritol 2-phosphate.

The protein in the N-terminal section; belongs to the IspD/TarI cytidylyltransferase family. IspD subfamily. It in the C-terminal section; belongs to the IspF family. A divalent metal cation serves as cofactor.

The enzyme catalyses 2-C-methyl-D-erythritol 4-phosphate + CTP + H(+) = 4-CDP-2-C-methyl-D-erythritol + diphosphate. The catalysed reaction is 4-CDP-2-C-methyl-D-erythritol 2-phosphate = 2-C-methyl-D-erythritol 2,4-cyclic diphosphate + CMP. Its pathway is isoprenoid biosynthesis; isopentenyl diphosphate biosynthesis via DXP pathway; isopentenyl diphosphate from 1-deoxy-D-xylulose 5-phosphate: step 2/6. The protein operates within isoprenoid biosynthesis; isopentenyl diphosphate biosynthesis via DXP pathway; isopentenyl diphosphate from 1-deoxy-D-xylulose 5-phosphate: step 4/6. Its function is as follows. Bifunctional enzyme that catalyzes the formation of 4-diphosphocytidyl-2-C-methyl-D-erythritol from CTP and 2-C-methyl-D-erythritol 4-phosphate (MEP) (IspD), and catalyzes the conversion of 4-diphosphocytidyl-2-C-methyl-D-erythritol 2-phosphate (CDP-ME2P) to 2-C-methyl-D-erythritol 2,4-cyclodiphosphate (ME-CPP) with a corresponding release of cytidine 5-monophosphate (CMP) (IspF). This Rhodobacter capsulatus (strain ATCC BAA-309 / NBRC 16581 / SB1003) protein is Bifunctional enzyme IspD/IspF.